We begin with the raw amino-acid sequence, 391 residues long: Phosphoglycerate kinase (391 aa).

Residues 21-23 (DFN), Arg36, 59-62 (HLGR), Arg113, and Arg146 each bind substrate. ATP-binding positions include Lys197, Glu319, and 345 to 348 (GGDT).

Belongs to the phosphoglycerate kinase family. As to quaternary structure, monomer.

The protein resides in the cytoplasm. It carries out the reaction (2R)-3-phosphoglycerate + ATP = (2R)-3-phospho-glyceroyl phosphate + ADP. The protein operates within carbohydrate degradation; glycolysis; pyruvate from D-glyceraldehyde 3-phosphate: step 2/5. This chain is Phosphoglycerate kinase, found in Methylococcus capsulatus (strain ATCC 33009 / NCIMB 11132 / Bath).